A 202-amino-acid chain; its full sequence is Josephin-1 (202 aa).

Ser15 bears the Phosphoserine mark. The Josephin domain occupies 23–202 (PPQIYHEKQR…EAHQSWRADV (180 aa)). Cys36 acts as the Nucleophile in catalysis. The active-site Proton acceptor is the His139.

As to quaternary structure, interacts with beta-actin/ACTB. Post-translationally, monoubiquitinated. Ubiquitination activates deubiquitination activity in vitro.

It localises to the cell membrane. It is found in the cytoplasm. The enzyme catalyses Thiol-dependent hydrolysis of ester, thioester, amide, peptide and isopeptide bonds formed by the C-terminal Gly of ubiquitin (a 76-residue protein attached to proteins as an intracellular targeting signal).. Its function is as follows. Deubiquitinates monoubiquitinated probes (in vitro). When ubiquitinated, cleaves 'Lys-63'-linked and 'Lys-48'-linked poly-ubiquitin chains (in vitro), hence may act as a deubiquitinating enzyme. May increase macropinocytosis and suppress clathrin- and caveolae-mediated endocytosis. May enhance membrane dynamics and cell motility independently of its catalytic activity. This chain is Josephin-1 (JOSD1), found in Bos taurus (Bovine).